The primary structure comprises 270 residues: Bis(5'-nucleosyl)-tetraphosphatase, symmetrical (270 aa).

Belongs to the Ap4A hydrolase family.

The catalysed reaction is P(1),P(4)-bis(5'-adenosyl) tetraphosphate + H2O = 2 ADP + 2 H(+). In terms of biological role, hydrolyzes diadenosine 5',5'''-P1,P4-tetraphosphate to yield ADP. The protein is Bis(5'-nucleosyl)-tetraphosphatase, symmetrical of Thioalkalivibrio sulfidiphilus (strain HL-EbGR7).